The following is a 350-amino-acid chain: dTDP-D-glucose 4,6-dehydratase (350 aa).

Thr142 is a substrate binding site. Asp143 serves as the catalytic Proton donor. Residues Glu144 and Tyr166 each act as proton acceptor in the active site.

Belongs to the NAD(P)-dependent epimerase/dehydratase family. dTDP-glucose dehydratase subfamily. NAD(+) is required as a cofactor.

It catalyses the reaction dTDP-alpha-D-glucose = dTDP-4-dehydro-6-deoxy-alpha-D-glucose + H2O. The sequence is that of dTDP-D-glucose 4,6-dehydratase (TGDS) from Homo sapiens (Human).